The sequence spans 192 residues: Small ribosomal subunit protein bS16 (192 aa).

Residues 149–161 show a composition bias toward basic and acidic residues; it reads EKKAAEAKAKAEA. Residues 149–192 are disordered; it reads EKKAAEAKAKAEAEAAAAAEEATETEETPMEAAAEEAPAAESAE. Over residues 178–192 the composition is skewed to low complexity; it reads MEAAAEEAPAAESAE.

This sequence belongs to the bacterial ribosomal protein bS16 family.

The polypeptide is Small ribosomal subunit protein bS16 (Porphyromonas gingivalis (strain ATCC 33277 / DSM 20709 / CIP 103683 / JCM 12257 / NCTC 11834 / 2561)).